The following is a 309-amino-acid chain: tRNA pseudouridine synthase B (309 aa).

Asp39 (nucleophile) is an active-site residue.

The protein belongs to the pseudouridine synthase TruB family. Type 1 subfamily.

The enzyme catalyses uridine(55) in tRNA = pseudouridine(55) in tRNA. In terms of biological role, responsible for synthesis of pseudouridine from uracil-55 in the psi GC loop of transfer RNAs. The polypeptide is tRNA pseudouridine synthase B (Bacillus licheniformis (strain ATCC 14580 / DSM 13 / JCM 2505 / CCUG 7422 / NBRC 12200 / NCIMB 9375 / NCTC 10341 / NRRL NRS-1264 / Gibson 46)).